Consider the following 681-residue polypeptide: MTTMNPFLVQSTLPYLAPHFDQIANHHYRPAFDEGMQQKRAEIAAIALNPQMPDFNNTILALEQSGELLTRVTSVFFAMTAAHTNDELQRLDEQFSAELAELANDIYLNGELFARVDAVWQRRESLGLDSESIRLVEVIHQRFVLAGAKLAQADKAKLKVLNTEAATLTSQFNQRLLAANKSGGLVVNDIAQLAGMSEQEIALAAEAAREKGLDNKWLIPLLNTTQQPALAEMRDRATREKLFIAGWTRAEKNDANDTRAIIQRLVEIRAQQATLLGFPHYAAWKIADQMAKTPEAALNFMREIVPAARQRASDELASIQAVIDKQQGGFSAQPWDWAFYAEQVRREKFDLDEAQLKPYFELNTVLNEGVFWTANQLFGIKFVERFDIPVYHPDVRVWEIFDHNGVGLALFYGDFFARDSKSGGAWMGNFVEQSTLNKTHPVIYNVCNYQKPAAGEPALLLWDDVITLFHEFGHTLHGLFARQRYATLSGTNTPRDFVEFPSQINEHWATHPQVFARYARHYQSGAAMPDELQQKMRNASLFNKGYEMSELLSAALLDMRWHCLEENEAMQDVDDFELRALVAENMDLPAIPPRYRSSYFAHIFGGGYAAGYYAYLWTQMLADDGYQWFVEQGGLTRENGLRFREAILSRGNSEDLERLYRQWRGKAPKIMPMLQHRGLNI.

His-470 is a Zn(2+) binding site. Residue Glu-471 is part of the active site. The Zn(2+) site is built by His-474 and His-477.

It belongs to the peptidase M3 family. Requires Zn(2+) as cofactor.

The protein resides in the cytoplasm. The catalysed reaction is Hydrolysis of unblocked, C-terminal dipeptides from oligopeptides, with broad specificity. Does not hydrolyze bonds in which P1' is Pro, or both P1 and P1' are Gly.. Its activity is regulated as follows. Stimulated by Mn(2+), Mg(2+), Co(2+) and Ca(2+), inhibited by Cu(2+), Ni(2+), Zn(2+), chymostatin and 1,10-phenanthroline. Removes dipeptides from the C-termini of N-blocked tripeptides, tetrapeptides and larger peptides. The polypeptide is Dipeptidyl carboxypeptidase (Escherichia coli (strain K12)).